The primary structure comprises 722 residues: Exocyst complex component 3-like protein 4 (722 aa).

Disordered stretches follow at residues 1–53 (MPSP…LGSL) and 92–131 (NDGP…KPEA). The span at 34–46 (SRKEPNAHRKDGT) shows a compositional bias: basic and acidic residues. Serine 52 carries the post-translational modification Phosphoserine. Positions 113–122 (GVSQQASTGA) are enriched in polar residues. Serine 513 is subject to Phosphoserine.

Belongs to the SEC6 family.

The protein is Exocyst complex component 3-like protein 4 (EXOC3L4) of Homo sapiens (Human).